A 135-amino-acid polypeptide reads, in one-letter code: MILVVTLACLIAVVCCQCPTTDQGQISKVFKAYDIDGNNKISRVEGTMVFRDADLNRDGALDNNEFSSEWAFYHNDYYSPFFNVADRNHNGRIEFVEGNQGFDHFDKNRDNEISSWEFTQTWMETVRPSSRPIDF.

The N-terminal stretch at 1–16 is a signal peptide; sequence MILVVTLACLIAVVCC. 2 consecutive EF-hand domains span residues 21–56 and 93–128; these read TDQG…ADLN and IEFV…TVRP. Ca(2+) is bound by residues aspartate 34, aspartate 36, asparagine 38, lysine 40, glutamate 45, aspartate 106, asparagine 108, aspartate 110, glutamate 112, and glutamate 117.

As to expression, component of the acid-insoluble organic matrix of the calcified shell.

It is found in the secreted. This Ruditapes philippinarum (Japanese carpet shell) protein is Insoluble matrix shell protein 5.